The primary structure comprises 272 residues: 3-keto-5-aminohexanoate cleavage enzyme (272 aa).

Residue E15 participates in (5S)-5-amino-3-oxohexanoate binding. H47 and H49 together coordinate Zn(2+). 3 residues coordinate (5S)-5-amino-3-oxohexanoate: S83, G86, and T107. E226 is a binding site for Zn(2+).

The protein belongs to the BKACE family. Kce subfamily. As to quaternary structure, homotetramer. Requires Zn(2+) as cofactor.

It carries out the reaction (5S)-5-amino-3-oxohexanoate + acetyl-CoA = (3S)-3-aminobutanoyl-CoA + acetoacetate. Its pathway is amino-acid degradation; L-lysine degradation via acetate pathway. Its activity is regulated as follows. 3-fold increase in activity by addition of 10 mM 2-mercaptoethanol. Addition of CoCl(2) and to a lesser extent MnCl(2) increases the activity but not MgCl(2). Inhibited by phosphate buffer but not by 5,5'-dithio-2-nitrobenzoic acid. Its function is as follows. Involved in the anaerobic fermentation of lysine. Catalyzes the reversible reaction between 3-keto-5-aminohexanoate (KAH) and acetyl-CoA to form 3-aminobutyryl-CoA and acetoacetate. The reaction involves the deprotonation of KAH, the nucleophilic addition onto acetyl-CoA and the intramolecular transfer of the CoA moiety. It can also use beta-alanyl-CoA as substrate. In Fusobacterium nucleatum subsp. nucleatum (strain ATCC 25586 / DSM 15643 / BCRC 10681 / CIP 101130 / JCM 8532 / KCTC 2640 / LMG 13131 / VPI 4355), this protein is 3-keto-5-aminohexanoate cleavage enzyme.